The sequence spans 137 residues: Small ribosomal subunit protein uS11A (137 aa).

S2 is subject to N-acetylserine. The interval 117-137 (DVTPVPSDSTRKKGGRRGRRL) is disordered. The segment covering 128-137 (KKGGRRGRRL) has biased composition (basic residues).

It belongs to the universal ribosomal protein uS11 family. In terms of assembly, component of the small ribosomal subunit (SSU). Mature yeast ribosomes consist of a small (40S) and a large (60S) subunit. The 40S small subunit contains 1 molecule of ribosomal RNA (18S rRNA) and 33 different proteins (encoded by 57 genes). The large 60S subunit contains 3 rRNA molecules (25S, 5.8S and 5S rRNA) and 46 different proteins (encoded by 81 genes). uS11 interacts with eS1 forming part of the mRNA exit tunnel. uS11 interacts with snoRNA U3. uS11 interacts with MPP10. Component of the ribosomal small subunit (SSU) processome composed of at least 40 protein subunits and snoRNA U3. Post-translationally, N-terminally acetylated by acetyltransferase NatA.

It is found in the cytoplasm. The protein resides in the nucleus. Its subcellular location is the nucleolus. Its function is as follows. Component of the ribosome, a large ribonucleoprotein complex responsible for the synthesis of proteins in the cell. The small ribosomal subunit (SSU) binds messenger RNAs (mRNAs) and translates the encoded message by selecting cognate aminoacyl-transfer RNA (tRNA) molecules. The large subunit (LSU) contains the ribosomal catalytic site termed the peptidyl transferase center (PTC), which catalyzes the formation of peptide bonds, thereby polymerizing the amino acids delivered by tRNAs into a polypeptide chain. The nascent polypeptides leave the ribosome through a tunnel in the LSU and interact with protein factors that function in enzymatic processing, targeting, and the membrane insertion of nascent chains at the exit of the ribosomal tunnel. uS11 is involved in nucleolar processing of pre-18S ribosomal RNA and ribosome assembly. This Saccharomyces cerevisiae (strain ATCC 204508 / S288c) (Baker's yeast) protein is Small ribosomal subunit protein uS11A.